The chain runs to 439 residues: Synaptotagmin-B (439 aa).

Residues 1 to 74 (MQAEMNQSAE…KEKFMNELQK (74 aa)) lie on the Vesicular side of the membrane. N-linked (GlcNAc...) asparagine glycans are attached at residues N6 and N46. The chain crosses the membrane as a helical span at residues 75–101 (IPLPPWALIAIAIVSGLLLLTCCLCIC). Topologically, residues 102 to 439 (KKCCCKKKKN…EVDVALGLKK (338 aa)) are cytoplasmic. Positions 113–155 (KEKGKGKKNDINMKDVKGSGGNQDDDDAETGLTEGEDKEEEAK) are disordered. Positions 119-129 (KKNDINMKDVK) are enriched in basic and acidic residues. Residues 135–151 (QDDDDAETGLTEGEDKE) show a composition bias toward acidic residues. Residues 153-399 (EAKEEEKLGK…AIGKIFVGSN (247 aa)) are phospholipid binding. C2 domains are found at residues 159–278 (KLGK…EEWR) and 290–423 (KLGD…AQWH). Positions 189, 190, 196, 248, 249, 250, 253, 254, 256, 321, 327, 381, 383, and 389 each coordinate Ca(2+).

This sequence belongs to the synaptotagmin family. As to quaternary structure, homodimer or homotrimer (possible). Ca(2+) is required as a cofactor. Spinal cord, brainstem, midbrain and electric organ.

The protein resides in the cytoplasmic vesicle. Its subcellular location is the secretory vesicle. The protein localises to the synaptic vesicle membrane. It localises to the synapse. Functionally, may have a regulatory role in the membrane interactions during trafficking of synaptic vesicles at the active zone of the synapse. It binds acidic phospholipids with a specificity that requires the presence of both an acidic head group and a diacyl backbone. This chain is Synaptotagmin-B (P65-B), found in Diplobatis ommata (Ocellated electric ray).